Here is a 406-residue protein sequence, read N- to C-terminus: Tryptophan synthase beta chain (406 aa).

K99 bears the N6-(pyridoxal phosphate)lysine mark.

Belongs to the TrpB family. As to quaternary structure, tetramer of two alpha and two beta chains. Requires pyridoxal 5'-phosphate as cofactor.

The enzyme catalyses (1S,2R)-1-C-(indol-3-yl)glycerol 3-phosphate + L-serine = D-glyceraldehyde 3-phosphate + L-tryptophan + H2O. The protein operates within amino-acid biosynthesis; L-tryptophan biosynthesis; L-tryptophan from chorismate: step 5/5. The beta subunit is responsible for the synthesis of L-tryptophan from indole and L-serine. Essential for production of nod factors and establishment of symbiosis. This Rhizobium etli (strain ATCC 51251 / DSM 11541 / JCM 21823 / NBRC 15573 / CFN 42) protein is Tryptophan synthase beta chain.